Reading from the N-terminus, the 601-residue chain is DNA topoisomerase I, mitochondrial (601 aa).

A mitochondrion-targeting transit peptide spans 1 to 50 (MRVVRLLRLRAALTLLGEVPRRPASRGVPGSRRTQKGSGARWEKEKHEDG). A disordered region spans residues 22-48 (RPASRGVPGSRRTQKGSGARWEKEKHE). Interaction with DNA stretches follow at residues 261-262 (KY), 324-329 (RAGNEK), and 421-423 (TAK). Positions 268–601 (CSKLKGETAW…LAMAGEDFEF (334 aa)) constitute a Topo IB-type catalytic domain. The O-(3'-phospho-DNA)-tyrosine intermediate role is filled by Tyr559.

This sequence belongs to the type IB topoisomerase family. Ca(2+) is required as a cofactor. The cofactor is Mg(2+).

It is found in the mitochondrion. It carries out the reaction ATP-independent breakage of single-stranded DNA, followed by passage and rejoining.. In terms of biological role, releases the supercoiling and torsional tension of DNA introduced during duplication of mitochondrial DNA by transiently cleaving and rejoining one strand of the DNA duplex. Introduces a single-strand break via transesterification at a target site in duplex DNA. The scissile phosphodiester is attacked by the catalytic tyrosine of the enzyme, resulting in the formation of a DNA-(3'-phosphotyrosyl)-enzyme intermediate and the expulsion of a 5'-OH DNA strand. The free DNA strand then rotates around the intact phosphodiester bond on the opposing strand, thus removing DNA supercoils. Finally, in the religation step, the DNA 5'-OH attacks the covalent intermediate to expel the active-site tyrosine and restore the DNA phosphodiester backbone. This is DNA topoisomerase I, mitochondrial (TOP1MT) from Pan troglodytes (Chimpanzee).